The chain runs to 852 residues: Exported protein YdbA (852 aa).

An N-terminal signal peptide occupies residues 1 to 21; sequence MQRKTLLSACIALALSGQGWA. Disordered regions lie at residues 30–50, 91–145, 307–354, 407–449, and 506–531; these read TTGEKKNTNVTCPADPGKLSP, DDDH…FNND, TITN…QDGD, TNGG…KVIQ, and NGGTGTQINGNDATANNSGKTTVDGK. Residues 307-319 are compositionally biased toward low complexity; that stretch reads TITNGGTGTQING. The segment covering 339–348 has biased composition (polar residues); the sequence is GTEINGNNGK. Low complexity predominate over residues 506–516; that stretch reads NGGTGTQINGN. Positions 517–526 are enriched in polar residues; sequence DATANNSGKT.

It localises to the secreted. The full-length protein (which is about 2000 amino acids long) is part of the autotransporter family. This is Exported protein YdbA (ydbA) from Escherichia coli (strain K12).